The sequence spans 344 residues: Photosystem II protein D1 (344 aa).

Residue threonine 2 is modified to N-acetylthreonine. Phosphothreonine is present on threonine 2. 3 helical membrane-spanning segments follow: residues 29 to 46 (YIGW…TATS), 118 to 133 (HFLL…EWEL), and 142 to 156 (WIAV…AATA). Histidine 118 is a binding site for chlorophyll a. Residue tyrosine 126 participates in pheophytin a binding. [CaMn4O5] cluster-binding residues include aspartate 170 and glutamate 189. The chain crosses the membrane as a helical span at residues 197 to 218 (FHMLGVAGVFGGSLFSAMHGSL). Histidine 198 contributes to the chlorophyll a binding site. A quinone-binding positions include histidine 215 and 264–265 (SF). Histidine 215 serves as a coordination point for Fe cation. Histidine 272 is a Fe cation binding site. Residues 274–288 (FLAAWPVVCIWFTAL) form a helical membrane-spanning segment. Histidine 332, glutamate 333, aspartate 342, and alanine 344 together coordinate [CaMn4O5] cluster.

This sequence belongs to the reaction center PufL/M/PsbA/D family. As to quaternary structure, PSII is composed of 1 copy each of membrane proteins PsbA, PsbB, PsbC, PsbD, PsbE, PsbF, PsbH, PsbI, PsbJ, PsbK, PsbL, PsbM, PsbT, PsbX, PsbY, PsbZ, Psb30/Ycf12, at least 3 peripheral proteins of the oxygen-evolving complex and a large number of cofactors. It forms dimeric complexes. The D1/D2 heterodimer binds P680, chlorophylls that are the primary electron donor of PSII, and subsequent electron acceptors. It shares a non-heme iron and each subunit binds pheophytin, quinone, additional chlorophylls, carotenoids and lipids. D1 provides most of the ligands for the Mn4-Ca-O5 cluster of the oxygen-evolving complex (OEC). There is also a Cl(-1) ion associated with D1 and D2, which is required for oxygen evolution. The PSII complex binds additional chlorophylls, carotenoids and specific lipids. serves as cofactor. Post-translationally, tyr-161 forms a radical intermediate that is referred to as redox-active TyrZ, YZ or Y-Z.

It localises to the plastid. The protein localises to the chloroplast thylakoid membrane. The catalysed reaction is 2 a plastoquinone + 4 hnu + 2 H2O = 2 a plastoquinol + O2. Photosystem II (PSII) is a light-driven water:plastoquinone oxidoreductase that uses light energy to abstract electrons from H(2)O, generating O(2) and a proton gradient subsequently used for ATP formation. It consists of a core antenna complex that captures photons, and an electron transfer chain that converts photonic excitation into a charge separation. The D1/D2 (PsbA/PsbD) reaction center heterodimer binds P680, the primary electron donor of PSII as well as several subsequent electron acceptors. The protein is Photosystem II protein D1 of Staurastrum punctulatum (Green alga).